The chain runs to 191 residues: Cytochrome c biogenesis ATP-binding export protein CcmA (191 aa).

Positions 6-189 (LVATDIACRR…RVRTLAIRNF (184 aa)) constitute an ABC transporter domain. 38 to 45 (GANGIGKS) contributes to the ATP binding site.

The protein belongs to the ABC transporter superfamily. CcmA exporter (TC 3.A.1.107) family. The complex is composed of two ATP-binding proteins (CcmA) and two transmembrane proteins (CcmB).

It is found in the cell inner membrane. The catalysed reaction is heme b(in) + ATP + H2O = heme b(out) + ADP + phosphate + H(+). Part of the ABC transporter complex CcmAB involved in the biogenesis of c-type cytochromes; once thought to export heme, this seems not to be the case, but its exact role is uncertain. Responsible for energy coupling to the transport system. This Novosphingobium aromaticivorans (strain ATCC 700278 / DSM 12444 / CCUG 56034 / CIP 105152 / NBRC 16084 / F199) protein is Cytochrome c biogenesis ATP-binding export protein CcmA.